The chain runs to 368 residues: Cytochrome b (368 aa).

Transmembrane regions (helical) follow at residues 25–45 (FGSMLLTCLILQTSTGFFLAM), 69–90 (WIMQNTHAIGASMFFICVYIHI), 105–125 (WLSGTALLITLMATAFFGYVL), and 170–190 (FFALHFILPFLIISLSSIHII). Heme b is bound by residues H75 and H89. Residues H174 and H188 each contribute to the heme b site. H193 lines the a ubiquinone pocket. The next 4 helical transmembrane spans lie at 218–238 (YKDMLVLTIMITLLFTIMSFT), 280–300 (LGGTLALLMSVMILTTTPFTH), 312–332 (LTQTLFWLLIATFITITWTAT), and 339–358 (FIFISQMASIIYFSFFIINP).

The protein belongs to the cytochrome b family. As to quaternary structure, the cytochrome bc1 complex contains 3 respiratory subunits (MT-CYB, CYC1 and UQCRFS1), 2 core proteins (UQCRC1 and UQCRC2) and probably 6 low-molecular weight proteins. Requires heme b as cofactor.

The protein resides in the mitochondrion inner membrane. Functionally, component of the ubiquinol-cytochrome c reductase complex (complex III or cytochrome b-c1 complex) that is part of the mitochondrial respiratory chain. The b-c1 complex mediates electron transfer from ubiquinol to cytochrome c. Contributes to the generation of a proton gradient across the mitochondrial membrane that is then used for ATP synthesis. This is Cytochrome b (MT-CYB) from Notechis ater (Black tiger snake).